Reading from the N-terminus, the 151-residue chain is 3-hydroxyacyl-[acyl-carrier-protein] dehydratase FabZ (151 aa).

His56 is a catalytic residue.

The protein belongs to the thioester dehydratase family. FabZ subfamily.

Its subcellular location is the cytoplasm. It carries out the reaction a (3R)-hydroxyacyl-[ACP] = a (2E)-enoyl-[ACP] + H2O. Its function is as follows. Involved in unsaturated fatty acids biosynthesis. Catalyzes the dehydration of short chain beta-hydroxyacyl-ACPs and long chain saturated and unsaturated beta-hydroxyacyl-ACPs. This is 3-hydroxyacyl-[acyl-carrier-protein] dehydratase FabZ from Rhodopseudomonas palustris (strain BisB18).